The sequence spans 181 residues: Protein Syd (181 aa).

Belongs to the Syd family.

Its subcellular location is the cell inner membrane. Functionally, interacts with the SecY protein in vivo. May bind preferentially to an uncomplexed state of SecY, thus functioning either as a chelating agent for excess SecY in the cell or as a regulatory factor that negatively controls the translocase function. This chain is Protein Syd, found in Escherichia coli O81 (strain ED1a).